The following is a 90-amino-acid chain: Probable Fe(2+)-trafficking protein (90 aa).

It belongs to the Fe(2+)-trafficking protein family.

Could be a mediator in iron transactions between iron acquisition and iron-requiring processes, such as synthesis and/or repair of Fe-S clusters in biosynthetic enzymes. The sequence is that of Probable Fe(2+)-trafficking protein from Pseudomonas fluorescens (strain SBW25).